The following is a 305-amino-acid chain: UDP-3-O-acyl-N-acetylglucosamine deacetylase (305 aa).

3 residues coordinate Zn(2+): His-79, His-238, and Asp-242. His-265 (proton donor) is an active-site residue.

The protein belongs to the LpxC family. Zn(2+) is required as a cofactor.

The enzyme catalyses a UDP-3-O-[(3R)-3-hydroxyacyl]-N-acetyl-alpha-D-glucosamine + H2O = a UDP-3-O-[(3R)-3-hydroxyacyl]-alpha-D-glucosamine + acetate. The protein operates within glycolipid biosynthesis; lipid IV(A) biosynthesis; lipid IV(A) from (3R)-3-hydroxytetradecanoyl-[acyl-carrier-protein] and UDP-N-acetyl-alpha-D-glucosamine: step 2/6. Its function is as follows. Catalyzes the hydrolysis of UDP-3-O-myristoyl-N-acetylglucosamine to form UDP-3-O-myristoylglucosamine and acetate, the committed step in lipid A biosynthesis. The protein is UDP-3-O-acyl-N-acetylglucosamine deacetylase of Enterobacter sp. (strain 638).